The chain runs to 67 residues: Conotoxin Cp1.1 (67 aa).

An N-terminal signal peptide occupies residues 1–26 (MMFRLTSVSCFLLVIACLNLFQVVLT). Intrachain disulfides connect C29/C43, C36/C48, C42/C52, and C47/C56. Tyrosine amide is present on Y60. The propeptide occupies 64–67 (ATFQ).

The protein belongs to the conotoxin I2 superfamily. Expressed by the venom duct.

The protein resides in the secreted. The protein is Conotoxin Cp1.1 of Conus capitaneus (Captain cone).